The chain runs to 92 residues: C-C motif chemokine 3 (92 aa).

Positions 1–23 (MQVSTAALAVLLCTMALCNQFSA) are cleaved as a signal peptide. 2 disulfide bridges follow: C33–C57 and C34–C73.

It belongs to the intercrine beta (chemokine CC) family. As to quaternary structure, self-associates. Also heterodimer of MIP-1-alpha(4-69) and MIP-1-beta(3-69). Interacts with CCR1. In terms of processing, N-terminal processed form LD78-alpha(4-69) is produced by proteolytic cleavage after secretion from HTLV1-transformed T-cells.

The protein localises to the secreted. In terms of biological role, monokine with inflammatory and chemokinetic properties. Binds to CCR1, CCR4 and CCR5. One of the major HIV-suppressive factors produced by CD8+ T-cells. Recombinant MIP-1-alpha induces a dose-dependent inhibition of different strains of HIV-1, HIV-2, and simian immunodeficiency virus (SIV). The chain is C-C motif chemokine 3 (CCL3) from Homo sapiens (Human).